The chain runs to 501 residues: GMP synthase [glutamine-hydrolyzing] (501 aa).

In terms of domain architecture, Glutamine amidotransferase type-1 spans 1-185 (MVLVVDYGSQ…LFNVCKLEKN (185 aa)). The active-site Nucleophile is cysteine 75. Catalysis depends on residues histidine 159 and glutamate 161. Residues 186–376 (WKIGDLVEEK…LGIPDRIINR (191 aa)) form the GMPS ATP-PPase domain. 213-219 (SGGVDSS) lines the ATP pocket.

As to quaternary structure, homodimer.

The catalysed reaction is XMP + L-glutamine + ATP + H2O = GMP + L-glutamate + AMP + diphosphate + 2 H(+). It functions in the pathway purine metabolism; GMP biosynthesis; GMP from XMP (L-Gln route): step 1/1. Functionally, catalyzes the synthesis of GMP from XMP. In Thermotoga maritima (strain ATCC 43589 / DSM 3109 / JCM 10099 / NBRC 100826 / MSB8), this protein is GMP synthase [glutamine-hydrolyzing] (guaA).